The sequence spans 181 residues: MIRHIAIFLCSLLMCSTTFADSVTSVSLGALLTALNERMLLMKDVAAYKMKHHLPIEDFTREQNVFAEAEEEAKNNGLDPHSITPFIRSLMDASKAIQYRYLAQWRTGSEPSFPIQTLSVTRQRIRQLDNQMLIIISQRLMVGAFSHDDMVWLRAQFNAPNLNESDISNVLAALSLVRRAR.

The first 20 residues, 1–20, serve as a signal peptide directing secretion; the sequence is MIRHIAIFLCSLLMCSTTFA. The region spanning 21-102 is the Chorismate mutase domain; it reads DSVTSVSLGA…ASKAIQYRYL (82 aa). 5 residues coordinate substrate: Arg38, Lys49, Asp58, Glu62, and Gln98.

It localises to the periplasm. The catalysed reaction is chorismate = prephenate. It functions in the pathway metabolic intermediate biosynthesis; prephenate biosynthesis; prephenate from chorismate: step 1/1. In terms of biological role, catalyzes the Claisen rearrangement of chorismate to prephenate. This Salmonella typhimurium protein is Monofunctional chorismate mutase.